The chain runs to 359 residues: DNA replication and repair protein RecF (359 aa).

30-37 contacts ATP; that stretch reads GPNAKGKT.

It belongs to the RecF family.

The protein resides in the cytoplasm. In terms of biological role, the RecF protein is involved in DNA metabolism; it is required for DNA replication and normal SOS inducibility. RecF binds preferentially to single-stranded, linear DNA. It also seems to bind ATP. This is DNA replication and repair protein RecF from Protochlamydia amoebophila (strain UWE25).